The chain runs to 142 residues: Large ribosomal subunit protein uL13 (142 aa).

Belongs to the universal ribosomal protein uL13 family. As to quaternary structure, part of the 50S ribosomal subunit.

Functionally, this protein is one of the early assembly proteins of the 50S ribosomal subunit, although it is not seen to bind rRNA by itself. It is important during the early stages of 50S assembly. This chain is Large ribosomal subunit protein uL13, found in Caldicellulosiruptor saccharolyticus (strain ATCC 43494 / DSM 8903 / Tp8T 6331).